The sequence spans 473 residues: Photosystem II CP43 reaction center protein (473 aa).

The propeptide occupies 1–14; sequence MKTLYSLRRFYPVE. Thr-15 is subject to N-acetylthreonine. A Phosphothreonine modification is found at Thr-15. 5 consecutive transmembrane segments (helical) span residues 69 to 93, 134 to 155, 178 to 200, 255 to 275, and 291 to 312; these read LFEV…PHLA, LLGP…KDRN, KALY…RKIT, KPFA…LSYS, and WFNN…ASQA. Residue Glu-367 coordinates [CaMn4O5] cluster. Residues 447 to 471 traverse the membrane as a helical segment; that stretch reads RARAAAAGFEKGIDRDFEPVLSMTP.

It belongs to the PsbB/PsbC family. PsbC subfamily. As to quaternary structure, PSII is composed of 1 copy each of membrane proteins PsbA, PsbB, PsbC, PsbD, PsbE, PsbF, PsbH, PsbI, PsbJ, PsbK, PsbL, PsbM, PsbT, PsbX, PsbY, PsbZ, Psb30/Ycf12, at least 3 peripheral proteins of the oxygen-evolving complex and a large number of cofactors. It forms dimeric complexes. Requires Binds multiple chlorophylls and provides some of the ligands for the Ca-4Mn-5O cluster of the oxygen-evolving complex. It may also provide a ligand for a Cl- that is required for oxygen evolution. PSII binds additional chlorophylls, carotenoids and specific lipids. as cofactor.

It localises to the plastid. Its subcellular location is the chloroplast thylakoid membrane. Its function is as follows. One of the components of the core complex of photosystem II (PSII). It binds chlorophyll and helps catalyze the primary light-induced photochemical processes of PSII. PSII is a light-driven water:plastoquinone oxidoreductase, using light energy to abstract electrons from H(2)O, generating O(2) and a proton gradient subsequently used for ATP formation. In Liriodendron tulipifera (Tuliptree), this protein is Photosystem II CP43 reaction center protein.